A 203-amino-acid chain; its full sequence is MACGATLKRTLDFDPLLSPASPKRRRCAPLSAPTSAAATPSSAAAATAASFSAAAASPQKYLRMEPSPFGDVSSRLTTEQILYNIKQEYKRMQKRRHLETSFQQTDPCCTSDAQPHAFLLSGPASPGTPSGTSSPLKKEQPLFTLRQVGMICERLLKEREEKVREEYEEILNTKLAEQYDAFVKFTHDQIMRRYGEQPASYVS.

Residues serine 18 and serine 21 each carry the phosphoserine modification. Residues 22–27 (PKRRRC) carry the Nuclear localization signal motif. The residue at position 57 (serine 57) is a Phosphoserine. The tract at residues 115-137 (PHAFLLSGPASPGTPSGTSSPLK) is disordered. Positions 119 to 135 (LLSGPASPGTPSGTSSP) are enriched in low complexity. Positions 200–203 (SYVS) match the SYVS motif motif.

This sequence belongs to the akirin family. Homodimer. Interacts with IPO9; the interaction is direct. Associates with 20S and 26S proteasomes. Interacts with SMARCD1; promoting SWI/SNF complex recruitment. Interacts with NFKBIZ. Interacts with YWHAB. Post-translationally, polyubiquitinated. Polyubiquitination is dependent of UBR5 that extends pre-ubiquitinated AKIRIN2.

The protein resides in the nucleus. The protein localises to the cytoplasm. It localises to the membrane. In terms of biological role, molecular adapter that acts as a bridge between a variety of multiprotein complexes, and which is involved in embryonic development, immunity, myogenesis and brain development. Plays a key role in nuclear protein degradation by promoting import of proteasomes into the nucleus: directly binds to fully assembled 20S proteasomes at one end and to nuclear import receptor IPO9 at the other end, bridging them together and mediating the import of pre-assembled proteasome complexes through the nuclear pore. Involved in innate immunity by regulating the production of interleukin-6 (IL6) downstream of Toll-like receptor (TLR): acts by bridging the NF-kappa-B inhibitor NFKBIZ and the SWI/SNF complex, leading to promote induction of IL6. Also involved in adaptive immunity by promoting B-cell activation. Involved in brain development: required for the survival and proliferation of cerebral cortical progenitor cells. Involved in myogenesis: required for skeletal muscle formation and skeletal development, possibly by regulating expression of muscle differentiation factors. This chain is Akirin-2, found in Bos taurus (Bovine).